The sequence spans 73 residues: Translation initiation factor IF-1 (73 aa).

Residues 1-73 form the S1-like domain; it reads MAKKDGVIEI…NRGRIVYRYR (73 aa).

It belongs to the IF-1 family. Component of the 30S ribosomal translation pre-initiation complex which assembles on the 30S ribosome in the order IF-2 and IF-3, IF-1 and N-formylmethionyl-tRNA(fMet); mRNA recruitment can occur at any time during PIC assembly.

Its subcellular location is the cytoplasm. In terms of biological role, one of the essential components for the initiation of protein synthesis. Stabilizes the binding of IF-2 and IF-3 on the 30S subunit to which N-formylmethionyl-tRNA(fMet) subsequently binds. Helps modulate mRNA selection, yielding the 30S pre-initiation complex (PIC). Upon addition of the 50S ribosomal subunit IF-1, IF-2 and IF-3 are released leaving the mature 70S translation initiation complex. This Acidothermus cellulolyticus (strain ATCC 43068 / DSM 8971 / 11B) protein is Translation initiation factor IF-1.